The sequence spans 475 residues: Aspartyl/glutamyl-tRNA(Asn/Gln) amidotransferase subunit B (475 aa).

This sequence belongs to the GatB/GatE family. GatB subfamily. In terms of assembly, heterotrimer of A, B and C subunits.

The enzyme catalyses L-glutamyl-tRNA(Gln) + L-glutamine + ATP + H2O = L-glutaminyl-tRNA(Gln) + L-glutamate + ADP + phosphate + H(+). The catalysed reaction is L-aspartyl-tRNA(Asn) + L-glutamine + ATP + H2O = L-asparaginyl-tRNA(Asn) + L-glutamate + ADP + phosphate + 2 H(+). Allows the formation of correctly charged Asn-tRNA(Asn) or Gln-tRNA(Gln) through the transamidation of misacylated Asp-tRNA(Asn) or Glu-tRNA(Gln) in organisms which lack either or both of asparaginyl-tRNA or glutaminyl-tRNA synthetases. The reaction takes place in the presence of glutamine and ATP through an activated phospho-Asp-tRNA(Asn) or phospho-Glu-tRNA(Gln). This Bacillus thuringiensis subsp. konkukian (strain 97-27) protein is Aspartyl/glutamyl-tRNA(Asn/Gln) amidotransferase subunit B.